The primary structure comprises 152 residues: 1,4-dihydroxy-2-naphthoyl-CoA hydrolase (152 aa).

Residue Asp20 is part of the active site.

The protein belongs to the 4-hydroxybenzoyl-CoA thioesterase family. DHNA-CoA hydrolase subfamily.

The enzyme catalyses 1,4-dihydroxy-2-naphthoyl-CoA + H2O = 1,4-dihydroxy-2-naphthoate + CoA + H(+). It participates in cofactor biosynthesis; phylloquinone biosynthesis. The protein operates within quinol/quinone metabolism; 1,4-dihydroxy-2-naphthoate biosynthesis; 1,4-dihydroxy-2-naphthoate from chorismate: step 7/7. Functionally, catalyzes the hydrolysis of 1,4-dihydroxy-2-naphthoyl-CoA (DHNA-CoA) to 1,4-dihydroxy-2-naphthoate (DHNA), a reaction involved in phylloquinone (vitamin K1) biosynthesis. In Parasynechococcus marenigrum (strain WH8102), this protein is 1,4-dihydroxy-2-naphthoyl-CoA hydrolase.